We begin with the raw amino-acid sequence, 363 residues long: Spermidine/putrescine import ATP-binding protein PotA (363 aa).

The region spanning 6–236 is the ABC transporter domain; it reads LEIRNVTRRF…PRSRFVADFI (231 aa). 38–45 contributes to the ATP binding site; sequence GPSGCGKT.

Belongs to the ABC transporter superfamily. Spermidine/putrescine importer (TC 3.A.1.11.1) family. In terms of assembly, the complex is composed of two ATP-binding proteins (PotA), two transmembrane proteins (PotB and PotC) and a solute-binding protein (PotD).

The protein resides in the cell inner membrane. The enzyme catalyses ATP + H2O + polyamine-[polyamine-binding protein]Side 1 = ADP + phosphate + polyamineSide 2 + [polyamine-binding protein]Side 1.. Part of the ABC transporter complex PotABCD involved in spermidine/putrescine import. Responsible for energy coupling to the transport system. This is Spermidine/putrescine import ATP-binding protein PotA from Pseudomonas aeruginosa (strain UCBPP-PA14).